The chain runs to 83 residues: ATP synthase subunit c (83 aa).

Transmembrane regions (helical) follow at residues 10 to 30 (IAVA…FGLL) and 52 to 72 (MFIV…IALY).

It belongs to the ATPase C chain family. F-type ATPases have 2 components, F(1) - the catalytic core - and F(0) - the membrane proton channel. F(1) has five subunits: alpha(3), beta(3), gamma(1), delta(1), epsilon(1). F(0) has three main subunits: a(1), b(2) and c(10-14). The alpha and beta chains form an alternating ring which encloses part of the gamma chain. F(1) is attached to F(0) by a central stalk formed by the gamma and epsilon chains, while a peripheral stalk is formed by the delta and b chains.

Its subcellular location is the cell inner membrane. In terms of biological role, f(1)F(0) ATP synthase produces ATP from ADP in the presence of a proton or sodium gradient. F-type ATPases consist of two structural domains, F(1) containing the extramembraneous catalytic core and F(0) containing the membrane proton channel, linked together by a central stalk and a peripheral stalk. During catalysis, ATP synthesis in the catalytic domain of F(1) is coupled via a rotary mechanism of the central stalk subunits to proton translocation. Key component of the F(0) channel; it plays a direct role in translocation across the membrane. A homomeric c-ring of between 10-14 subunits forms the central stalk rotor element with the F(1) delta and epsilon subunits. The sequence is that of ATP synthase subunit c from Shewanella amazonensis (strain ATCC BAA-1098 / SB2B).